We begin with the raw amino-acid sequence, 89 residues long: Sec-independent protein translocase protein TatA (89 aa).

Residues 1-21 (MGGISIWQLLIIAVIVVLLFG) traverse the membrane as a helical segment. The disordered stretch occupies residues 65-89 (ADKQADTNQEQAKTEDAKRHDKEQV). Over residues 76–89 (AKTEDAKRHDKEQV) the composition is skewed to basic and acidic residues.

The protein belongs to the TatA/E family. In terms of assembly, the Tat system comprises two distinct complexes: a TatABC complex, containing multiple copies of TatA, TatB and TatC subunits, and a separate TatA complex, containing only TatA subunits. Substrates initially bind to the TatABC complex, which probably triggers association of the separate TatA complex to form the active translocon.

Its subcellular location is the cell inner membrane. Its function is as follows. Part of the twin-arginine translocation (Tat) system that transports large folded proteins containing a characteristic twin-arginine motif in their signal peptide across membranes. TatA could form the protein-conducting channel of the Tat system. This chain is Sec-independent protein translocase protein TatA, found in Shigella flexneri.